The following is a 107-amino-acid chain: Putative double-stranded DNA mimic protein PC1_1990 (107 aa).

The protein belongs to the putative dsDNA mimic protein family.

May act as a double-stranded DNA (dsDNA) mimic. Probably regulates the activity of a dsDNA-binding protein. This chain is Putative double-stranded DNA mimic protein PC1_1990, found in Pectobacterium carotovorum subsp. carotovorum (strain PC1).